The primary structure comprises 320 residues: Cytochrome f (320 aa).

Positions 1 to 35 are cleaved as a signal peptide; it reads MRNINTYDWMKKWMTRSISILVMIHMITRTSISNA. Heme is bound by residues tyrosine 36, cysteine 56, cysteine 59, and histidine 60. Residues 286-306 form a helical membrane-spanning segment; that stretch reads VQGLLLLLASVILAQIFLVLK.

Belongs to the cytochrome f family. As to quaternary structure, the 4 large subunits of the cytochrome b6-f complex are cytochrome b6, subunit IV (17 kDa polypeptide, petD), cytochrome f and the Rieske protein, while the 4 small subunits are PetG, PetL, PetM and PetN. The complex functions as a dimer. Requires heme as cofactor.

It is found in the plastid. It localises to the chloroplast thylakoid membrane. In terms of biological role, component of the cytochrome b6-f complex, which mediates electron transfer between photosystem II (PSII) and photosystem I (PSI), cyclic electron flow around PSI, and state transitions. The sequence is that of Cytochrome f from Cycas taitungensis (Prince sago).